A 219-amino-acid polypeptide reads, in one-letter code: Zinc finger C2HC domain-containing protein 1B (219 aa).

C2HC/C3H-type zinc fingers lie at residues 14–43 (ELFP…LFNK) and 117–146 (DYIQ…QESR). Residues cysteine 18, cysteine 21, histidine 33, cysteine 37, cysteine 121, cysteine 124, histidine 136, and cysteine 140 each contribute to the Zn(2+) site. The tract at residues 190–219 (EASAAPTRPAVDPASGAKLRQGFAKSSKKD) is disordered.

Belongs to the ZC2HC1 family. Requires Zn(2+) as cofactor.

This is Zinc finger C2HC domain-containing protein 1B (ZC2HC1B) from Bos taurus (Bovine).